The chain runs to 399 residues: Cell division protein FtsZ (399 aa).

GTP is bound by residues 30–34, 117–119, glutamate 148, lysine 152, and aspartate 196; these read GGGSN and GTG. A disordered region spans residues 349–368; it reads TLMSGNQNAPSGSYEQQDSS. A compositionally biased stretch (polar residues) spans 351–368; the sequence is MSGNQNAPSGSYEQQDSS.

It belongs to the FtsZ family. Homodimer. Polymerizes to form a dynamic ring structure in a strictly GTP-dependent manner. Interacts directly with several other division proteins.

It is found in the cytoplasm. Its function is as follows. Essential cell division protein that forms a contractile ring structure (Z ring) at the future cell division site. The regulation of the ring assembly controls the timing and the location of cell division. One of the functions of the FtsZ ring is to recruit other cell division proteins to the septum to produce a new cell wall between the dividing cells. Binds GTP and shows GTPase activity. This is Cell division protein FtsZ from Borreliella burgdorferi (strain ATCC 35210 / DSM 4680 / CIP 102532 / B31) (Borrelia burgdorferi).